A 319-amino-acid chain; its full sequence is Coproporphyrin III ferrochelatase 2 (319 aa).

Residues tyrosine 13, arginine 30, 46 to 47 (RY), serine 54, and tyrosine 125 contribute to the Fe-coproporphyrin III site. Fe(2+) is bound by residues histidine 181 and glutamate 262.

The protein belongs to the ferrochelatase family.

It localises to the cytoplasm. The enzyme catalyses Fe-coproporphyrin III + 2 H(+) = coproporphyrin III + Fe(2+). It functions in the pathway porphyrin-containing compound metabolism; protoheme biosynthesis. In terms of biological role, involved in coproporphyrin-dependent heme b biosynthesis. Catalyzes the insertion of ferrous iron into coproporphyrin III to form Fe-coproporphyrin III. The protein is Coproporphyrin III ferrochelatase 2 of Bacillus anthracis.